Reading from the N-terminus, the 599-residue chain is Elongation factor 4 (599 aa).

The region spanning 2–184 is the tr-type G domain; it reads KNIRNFSIIA…RLVRDIPPPE (183 aa). Residues 14-19 and 131-134 contribute to the GTP site; these read DHGKST and NKID.

Belongs to the TRAFAC class translation factor GTPase superfamily. Classic translation factor GTPase family. LepA subfamily.

It localises to the cell inner membrane. It catalyses the reaction GTP + H2O = GDP + phosphate + H(+). Functionally, required for accurate and efficient protein synthesis under certain stress conditions. May act as a fidelity factor of the translation reaction, by catalyzing a one-codon backward translocation of tRNAs on improperly translocated ribosomes. Back-translocation proceeds from a post-translocation (POST) complex to a pre-translocation (PRE) complex, thus giving elongation factor G a second chance to translocate the tRNAs correctly. Binds to ribosomes in a GTP-dependent manner. This chain is Elongation factor 4, found in Shigella sonnei (strain Ss046).